The following is a 398-amino-acid chain: Phosphoglycerate kinase (398 aa).

Substrate-binding positions include 24-26 (DFN), Arg39, 62-65 (HFGR), Arg121, and Arg154. ATP is bound by residues Lys205, Gly296, Glu327, and 354-357 (GGDS).

Belongs to the phosphoglycerate kinase family. In terms of assembly, monomer.

It localises to the cytoplasm. The enzyme catalyses (2R)-3-phosphoglycerate + ATP = (2R)-3-phospho-glyceroyl phosphate + ADP. Its pathway is carbohydrate degradation; glycolysis; pyruvate from D-glyceraldehyde 3-phosphate: step 2/5. In Trichodesmium erythraeum (strain IMS101), this protein is Phosphoglycerate kinase.